A 168-amino-acid polypeptide reads, in one-letter code: Fusion protein P6 (168 aa).

The next 4 helical transmembrane spans lie at 29-49 (IWPLLLIVAIIYFAPYLAGFF), 52-72 (AGFTGIGGIFSSIATTITPTL), 94-114 (FQSLGMGTQLAVVSGAAALIA), and 143-163 (ALPGWIWIAAGGLAVWALWPS).

As to quaternary structure, interacts with P3.

It localises to the virion membrane. Functionally, mediates the fusion with the host outer membrane during virus entry into the host cell. The chain is Fusion protein P6 (P6) from Pseudomonas savastanoi pv. phaseolicola (Pseudomonas syringae pv. phaseolicola).